We begin with the raw amino-acid sequence, 141 residues long: MNKPYTKPDYEQELRRAGVRITRPRRIILNILNETEDHPDALEIFRRAVEEDDSISLSTVYRTIKLLEERGAIHRHAFAGGPSRFEQASGAHHDHIIDMDSGDVVEFHSDKIEKLQEEIARSLGFEIVHHRLELYCKKLKS.

The interval 1–89 is DNA-binding; sequence MNKPYTKPDY…GGPSRFEQAS (89 aa). Zn(2+) is bound by residues H38 and E86. Residues 90-141 are dimerization; that stretch reads GAHHDHIIDMDSGDVVEFHSDKIEKLQEEIARSLGFEIVHHRLELYCKKLKS. 2 residues coordinate Fe cation: H92 and D94. Zn(2+) contacts are provided by H95 and E106. Fe cation contacts are provided by E113 and H130.

Belongs to the Fur family. Homodimer.

The protein resides in the cytoplasm. In terms of biological role, acts as a global negative controlling element, employing Fe(2+) as a cofactor to bind the operator of the repressed genes. The polypeptide is Ferric uptake regulation protein (fur) (Brucella suis biovar 1 (strain 1330)).